An 804-amino-acid chain; its full sequence is DNA gyrase subunit A (804 aa).

The 465-residue stretch at 31–495 (IPDVRDGLKP…QSIEYNEEEL (465 aa)) folds into the Topo IIA-type catalytic domain. Tyr-119 (O-(5'-phospho-DNA)-tyrosine intermediate) is an active-site residue. The GyrA-box signature appears at 522-528 (QKRGGKG).

The protein belongs to the type II topoisomerase GyrA/ParC subunit family. As to quaternary structure, heterotetramer, composed of two GyrA and two GyrB chains. In the heterotetramer, GyrA contains the active site tyrosine that forms a transient covalent intermediate with DNA, while GyrB binds cofactors and catalyzes ATP hydrolysis.

It localises to the cytoplasm. The catalysed reaction is ATP-dependent breakage, passage and rejoining of double-stranded DNA.. A type II topoisomerase that negatively supercoils closed circular double-stranded (ds) DNA in an ATP-dependent manner to modulate DNA topology and maintain chromosomes in an underwound state. Negative supercoiling favors strand separation, and DNA replication, transcription, recombination and repair, all of which involve strand separation. Also able to catalyze the interconversion of other topological isomers of dsDNA rings, including catenanes and knotted rings. Type II topoisomerases break and join 2 DNA strands simultaneously in an ATP-dependent manner. The polypeptide is DNA gyrase subunit A (Thermotoga maritima (strain ATCC 43589 / DSM 3109 / JCM 10099 / NBRC 100826 / MSB8)).